The sequence spans 236 residues: THO complex subunit 7B (236 aa).

Positions 99-228 form a coiled coil; that stretch reads EANLREKESF…IRSASEDQRN (130 aa).

The protein belongs to the THOC7 family. Component of the THO complex, which is composed of THO1, THO2, THO3, THO5, THO6 and THO7.

Its subcellular location is the nucleus. Its function is as follows. Acts as a component of the THO subcomplex of the TREX complex which is thought to couple mRNA transcription, processing and nuclear export. This chain is THO complex subunit 7B (THO7B), found in Arabidopsis thaliana (Mouse-ear cress).